Here is a 518-residue protein sequence, read N- to C-terminus: MQLSVWTYEGPPHIGAMRIATAMRDVHYVLHAPQGDTYADLLFTMIERRDRRPPVTYTTFQARDLGGDTADLLQSAARAAYERFQPQAMLVGASCTAELIQDDPGGLAQALRLPIPVIPLELPAYQRKENWGASETFYRIVRALAASSADGSPRHERKAGARPVCNLLGPTALGFRHRDDLAEVTRQVVELGIEINVVAPWNATPADLARLPQADFNIVLYPEIALTAAQWLNRQFGQPYTKTIPIGVGATRDFIREVAGLAGVDAEPVLSRAESRLPWYSRSVDSTYLTGKRVFIFGDATHAVAAARVATQELGFEVVGLGTYAREFAREIREAAALYGIEPLITDDYLQVEARVSELRPELVLGTQMERHIAKRLGIPCAVISSPTHVQDFPARYSPQMGFEGANVLFDTWVHPLMMGLEEHLLGMFREDHEFADHAPSHLGAAPAAPPQQPQLRVVETVTSTELAWASDAERELTKIPFFVRGKARRNTERFARERNVNLITLETLYDAKAHFGR.

[4Fe-4S] cluster is bound at residue Asp36. Residue Asp285 is the Proton donor of the active site. 420–421 serves as a coordination point for substrate; the sequence is GL.

This sequence belongs to the ChlB/BchB/BchZ family. As to quaternary structure, protochlorophyllide reductase is composed of three subunits; BchL, BchN and BchB. Forms a heterotetramer of two BchB and two BchN subunits. [4Fe-4S] cluster serves as cofactor.

The enzyme catalyses chlorophyllide a + oxidized 2[4Fe-4S]-[ferredoxin] + 2 ADP + 2 phosphate = protochlorophyllide a + reduced 2[4Fe-4S]-[ferredoxin] + 2 ATP + 2 H2O. It functions in the pathway porphyrin-containing compound metabolism; bacteriochlorophyll biosynthesis (light-independent). Its function is as follows. Component of the dark-operative protochlorophyllide reductase (DPOR) that uses Mg-ATP and reduced ferredoxin to reduce ring D of protochlorophyllide (Pchlide) to form chlorophyllide a (Chlide). This reaction is light-independent. The NB-protein (BchN-BchB) is the catalytic component of the complex. The sequence is that of Light-independent protochlorophyllide reductase subunit B from Bradyrhizobium sp. (strain ORS 278).